Consider the following 118-residue polypeptide: Large ribosomal subunit protein uL18 (118 aa).

Over residues 1-10 (MKTTRRDATR) the composition is skewed to basic and acidic residues. The interval 1–20 (MKTTRRDATRSRHQRVRRKV) is disordered. The span at 11-20 (SRHQRVRRKV) shows a compositional bias: basic residues.

Belongs to the universal ribosomal protein uL18 family. Part of the 50S ribosomal subunit; part of the 5S rRNA/L5/L18/L25 subcomplex. Contacts the 5S and 23S rRNAs.

Its function is as follows. This is one of the proteins that bind and probably mediate the attachment of the 5S RNA into the large ribosomal subunit, where it forms part of the central protuberance. The sequence is that of Large ribosomal subunit protein uL18 from Acaryochloris marina (strain MBIC 11017).